Consider the following 358-residue polypeptide: Putative spore germination protein YfkT (358 aa).

Transmembrane regions (helical) follow at residues 10–30, 36–56, 81–101, 107–127, 143–163, 179–199, 210–230, 262–282, 297–317, and 326–346; these read LFFGALYTLAVGLKHAPILMI, NAWHSYILGVVIVIPALWLMH, IIILLFSLYFLLINAHDIRFF, ILFLPRTPMAVLGGVIIFVAI, IFLFPFGILVLFLPFTLATQI, LQSGYYAFGTMGELIILPLLF, IFAILLGALLLAVMLFSSISV, IIAAFWIPVIMVKIAGSLYIV, AMYTPTGMFSVVCGFWFFLNT, and IKPIINVVISLLLPLLIYLII.

It belongs to the amino acid-polyamine-organocation (APC) superfamily. Spore germination protein (SGP) (TC 2.A.3.9) family.

The protein localises to the cell membrane. Its function is as follows. May be involved in spore germination. The chain is Putative spore germination protein YfkT (yfkT) from Bacillus subtilis (strain 168).